Reading from the N-terminus, the 274-residue chain is uncharacterized protein (274 aa).

This is an uncharacterized protein from Caenorhabditis elegans.